A 216-amino-acid polypeptide reads, in one-letter code: Redox-sensing transcriptional repressor Rex (216 aa).

A DNA-binding region (H-T-H motif) is located at residues 20–59 (QYYRLFKSLVEENVTRTNSQLISEKIGVDAATIRRDFSLF). 94–99 (GVGNLG) is an NAD(+) binding site.

This sequence belongs to the transcriptional regulatory Rex family. In terms of assembly, homodimer.

It is found in the cytoplasm. Functionally, modulates transcription in response to changes in cellular NADH/NAD(+) redox state. The protein is Redox-sensing transcriptional repressor Rex of Lactococcus lactis subsp. cremoris (strain SK11).